Here is a 697-residue protein sequence, read N- to C-terminus: Elongation factor G (697 aa).

One can recognise a tr-type G domain in the interval 8-282; the sequence is ENTRNIGIMA…AIVDYMPSPV (275 aa). GTP contacts are provided by residues 17–24, 81–85, and 135–138; these read AHIDAGKT, DTPGH, and NKMD.

This sequence belongs to the TRAFAC class translation factor GTPase superfamily. Classic translation factor GTPase family. EF-G/EF-2 subfamily.

It localises to the cytoplasm. Functionally, catalyzes the GTP-dependent ribosomal translocation step during translation elongation. During this step, the ribosome changes from the pre-translocational (PRE) to the post-translocational (POST) state as the newly formed A-site-bound peptidyl-tRNA and P-site-bound deacylated tRNA move to the P and E sites, respectively. Catalyzes the coordinated movement of the two tRNA molecules, the mRNA and conformational changes in the ribosome. This chain is Elongation factor G, found in Acetivibrio thermocellus (strain ATCC 27405 / DSM 1237 / JCM 9322 / NBRC 103400 / NCIMB 10682 / NRRL B-4536 / VPI 7372) (Clostridium thermocellum).